The chain runs to 125 residues: Egg cell-secreted protein 1.3 (125 aa).

The first 24 residues, 1–24, serve as a signal peptide directing secretion; it reads MASNTSFLFVTVTLLLVLNVSSRA.

The protein belongs to the plant egg cell-secreted peptide family. In terms of tissue distribution, restricted to female reproductive tissues, specifically accumulating in storage vesicles of the unfertilized egg cell.

It localises to the cytoplasmic vesicle. It is found in the secreted. Functionally, involved in the regulation of gamete interactions during the double fertilization and to prevent multiple-pollen tube attraction; mediates the redistribution of the gamete fusogen HAP2/GCS1 to the cell surface after secretion upon sperm arrival. The chain is Egg cell-secreted protein 1.3 (EC1.3) from Arabidopsis thaliana (Mouse-ear cress).